The chain runs to 449 residues: N-succinylarginine dihydrolase (449 aa).

Substrate-binding positions include 19–28 (GGLSYGNVAS), asparagine 110, and 137–138 (HR). A disordered region spans residues 23–43 (YGNVASQSNSQQASNPREAAR). Residues 27 to 37 (ASQSNSQQASN) are compositionally biased toward low complexity. The active site involves glutamate 174. Residue arginine 214 participates in substrate binding. Histidine 250 is an active-site residue. 2 residues coordinate substrate: aspartate 252 and asparagine 365. Cysteine 371 acts as the Nucleophile in catalysis.

It belongs to the succinylarginine dihydrolase family. Homodimer.

The catalysed reaction is N(2)-succinyl-L-arginine + 2 H2O + 2 H(+) = N(2)-succinyl-L-ornithine + 2 NH4(+) + CO2. It functions in the pathway amino-acid degradation; L-arginine degradation via AST pathway; L-glutamate and succinate from L-arginine: step 2/5. Catalyzes the hydrolysis of N(2)-succinylarginine into N(2)-succinylornithine, ammonia and CO(2). This Pseudomonas putida (strain ATCC 47054 / DSM 6125 / CFBP 8728 / NCIMB 11950 / KT2440) protein is N-succinylarginine dihydrolase.